The sequence spans 384 residues: uncharacterized protein (384 aa).

The protein to S.pombe SpAC2E11.17.

This is an uncharacterized protein from Schizosaccharomyces pombe (strain 972 / ATCC 24843) (Fission yeast).